The sequence spans 255 residues: Small ribosomal subunit protein uS2 (255 aa).

It belongs to the universal ribosomal protein uS2 family.

This chain is Small ribosomal subunit protein uS2, found in Streptococcus uberis (strain ATCC BAA-854 / 0140J).